The following is a 253-amino-acid chain: Sulfate transporter CysZ (253 aa).

Helical transmembrane passes span 31–51 (FVIL…WWLF), 72–92 (LSYI…GYFF), 151–171 (IVLL…PVLW), and 222–242 (IPVL…AMWV).

Belongs to the CysZ family.

Its subcellular location is the cell inner membrane. In terms of biological role, high affinity, high specificity proton-dependent sulfate transporter, which mediates sulfate uptake. Provides the sulfur source for the cysteine synthesis pathway. This Escherichia fergusonii (strain ATCC 35469 / DSM 13698 / CCUG 18766 / IAM 14443 / JCM 21226 / LMG 7866 / NBRC 102419 / NCTC 12128 / CDC 0568-73) protein is Sulfate transporter CysZ.